The following is a 252-amino-acid chain: Phosphate import ATP-binding protein PstB 1 (252 aa).

In terms of domain architecture, ABC transporter spans 6-247 (LQIRDLSVYY…PKRKETEDYI (242 aa)). ATP is bound at residue 38–45 (GPSGSGKS).

Belongs to the ABC transporter superfamily. Phosphate importer (TC 3.A.1.7) family. As to quaternary structure, the complex is composed of two ATP-binding proteins (PstB), two transmembrane proteins (PstC and PstA) and a solute-binding protein (PstS).

The protein localises to the cell membrane. The enzyme catalyses phosphate(out) + ATP + H2O = ADP + 2 phosphate(in) + H(+). Part of the ABC transporter complex PstSACB involved in phosphate import. Responsible for energy coupling to the transport system. This is Phosphate import ATP-binding protein PstB 1 from Streptococcus pyogenes serotype M1.